We begin with the raw amino-acid sequence, 318 residues long: uncharacterized protein (318 aa).

The protein belongs to the asfivirus F317L family.

The protein localises to the virion. This is an uncharacterized protein from African swine fever virus (isolate Tick/Malawi/Lil 20-1/1983) (ASFV).